The chain runs to 238 residues: Ribonuclease PH (238 aa).

Residues Arg86 and 124-126 each bind phosphate; that span reads GTR.

It belongs to the RNase PH family. In terms of assembly, homohexameric ring arranged as a trimer of dimers.

The catalysed reaction is tRNA(n+1) + phosphate = tRNA(n) + a ribonucleoside 5'-diphosphate. In terms of biological role, phosphorolytic 3'-5' exoribonuclease that plays an important role in tRNA 3'-end maturation. Removes nucleotide residues following the 3'-CCA terminus of tRNAs; can also add nucleotides to the ends of RNA molecules by using nucleoside diphosphates as substrates, but this may not be physiologically important. Probably plays a role in initiation of 16S rRNA degradation (leading to ribosome degradation) during starvation. The polypeptide is Ribonuclease PH (Salmonella gallinarum (strain 287/91 / NCTC 13346)).